Here is a 142-residue protein sequence, read N- to C-terminus: Large-conductance mechanosensitive channel (142 aa).

Transmembrane regions (helical) follow at residues 14–34 (VVDL…VSSL) and 86–106 (FGQF…VFLV).

Belongs to the MscL family. Homopentamer.

The protein resides in the cell inner membrane. Functionally, channel that opens in response to stretch forces in the membrane lipid bilayer. May participate in the regulation of osmotic pressure changes within the cell. The sequence is that of Large-conductance mechanosensitive channel from Rhizorhabdus wittichii (strain DSM 6014 / CCUG 31198 / JCM 15750 / NBRC 105917 / EY 4224 / RW1) (Sphingomonas wittichii).